Reading from the N-terminus, the 182-residue chain is Glutathione-regulated potassium-efflux system ancillary protein KefG (182 aa).

This sequence belongs to the NAD(P)H dehydrogenase (quinone) family. KefG subfamily. In terms of assembly, interacts with KefB.

It is found in the cell inner membrane. It carries out the reaction a quinone + NADH + H(+) = a quinol + NAD(+). The catalysed reaction is a quinone + NADPH + H(+) = a quinol + NADP(+). Its function is as follows. Regulatory subunit of a potassium efflux system that confers protection against electrophiles. Required for full activity of KefB. This chain is Glutathione-regulated potassium-efflux system ancillary protein KefG, found in Yersinia pestis bv. Antiqua (strain Nepal516).